A 294-amino-acid polypeptide reads, in one-letter code: MSAEIEEATNAVNNLSINDSEQQPRAPTHKTVIDPEDTIFIGNVAHECTEDDLKQLFVEEFGDEVSVEIPIKEHTDGHIPASKHALVKFPTKIDFDNIKENYDTKVVKDREIHIKRARTPGQMQRGGFRGRGGFRGRGGFRGGFRGGYRGGFRGRGNFRGRGGARGGFNGQKREKIPLDQMERSKDTLYINNVPFKATKEEVAEFFGTDADSISLPMRKMRDQHTGRIFTSDSANRGMAFVTFSGENVDIEAKAEEFKGKVFGDRELTVDVAVIRPENDEEEIEQETGSEEKQE.

A disordered region spans residues 1–30 (MSAEIEEATNAVNNLSINDSEQQPRAPTHK). At Ser2 the chain carries N-acetylserine. Ser2 and Ser16 each carry phosphoserine. Residues 10 to 25 (NAVNNLSINDSEQQPR) are compositionally biased toward polar residues. The 83-residue stretch at 37–119 (DTIFIGNVAH…REIHIKRART (83 aa)) folds into the RRM 1 domain. Thr49 carries the phosphothreonine modification. The residue at position 66 (Ser66) is a Phosphoserine. Phosphothreonine is present on residues Thr91 and Thr119. Arg125 bears the Omega-N-methylarginine mark. The tract at residues 131–151 (RGGFRGRGGFRGGFRGGYRGG) is RNA-binding RGG-box. Dimethylated arginine is present on residues Arg135, Arg137, and Arg141. Residue Arg145 is modified to Dimethylated arginine; alternate. Position 145 is an omega-N-methylarginine; alternate (Arg145). The residue at position 149 (Arg149) is an Omega-N-methylarginine. Residues 151-169 (GFRGRGNFRGRGGARGGFN) are compositionally biased toward gly residues. The disordered stretch occupies residues 151-171 (GFRGRGNFRGRGGARGGFNGQ). Dimethylated arginine occurs at positions 153, 155, and 159. Arg161 and Arg165 each carry dimethylated arginine; alternate. Residues Arg161 and Arg165 each carry the omega-N-methylarginine; alternate modification. Positions 186–274 (DTLYINNVPF…RELTVDVAVI (89 aa)) constitute an RRM 2 domain. Thr242 carries the post-translational modification Phosphothreonine. Ser244 carries the phosphoserine modification. A disordered region spans residues 275 to 294 (RPENDEEEIEQETGSEEKQE). The segment covering 278-288 (NDEEEIEQETG) has biased composition (acidic residues). The residue at position 287 (Thr287) is a Phosphothreonine. Ser289 bears the Phosphoserine mark.

It belongs to the RRM GAR family. Associated with snR10 and snR11 small nuclear RNAs.

The protein resides in the cytoplasm. It is found in the nucleus. Its subcellular location is the nucleolus. The protein localises to the P-body. It localises to the stress granule. In terms of biological role, functions in the transition of mRNAs from translation to an mRNP complex destined for decapping. High-copy-number suppressor of decapping defects. Overexpression suppresses decapping defects in both DCP1-2 and DCP2-7 mutations. Acts to promote translational repression of mRNA in conjunction with DHH1 and subsequent mRNA localization to P bodies. Promotes translational repression of mRNA during glucose deprivation. The protein is Single-stranded nucleic acid-binding protein (SBP1) of Saccharomyces cerevisiae (strain ATCC 204508 / S288c) (Baker's yeast).